Consider the following 473-residue polypeptide: Homeobox protein ATH1 (473 aa).

Residues 205-221 (SKYLHSVQEILSHFAAY) are SR/KY domain. The BELL domain stretch occupies residues 266-336 (QRRALEAKKT…NLRERICKKI (71 aa)). Residues 372-434 (IWRPQRGLPE…NARVRLWKPM (63 aa)) constitute a DNA-binding region (homeobox). The interval 448–473 (NNSHIQPNGPTLRMPKSVMMSQAMHK) is disordered.

This sequence belongs to the TALE/BELL homeobox family. In terms of assembly, may form heterodimeric complex with the TALE/KNOX protein STM. As to expression, most abundant in flowers.

It localises to the nucleus. Functionally, transcription factor which may be involved in the signal transduction pathway downstream of the COP1 gene. Controls floral competency as a specific activator of FLC expression. Is responsive of the nuclear import of SHOOT MERISTEMLESS (STM). This chain is Homeobox protein ATH1 (ATH1), found in Arabidopsis thaliana (Mouse-ear cress).